A 578-amino-acid chain; its full sequence is Isocitrate dehydrogenase kinase/phosphatase (578 aa).

ATP contacts are provided by residues 315–321 and K336; that span reads APGIRGM. The active site involves D371.

It belongs to the AceK family.

It is found in the cytoplasm. It catalyses the reaction L-seryl-[isocitrate dehydrogenase] + ATP = O-phospho-L-seryl-[isocitrate dehydrogenase] + ADP + H(+). Functionally, bifunctional enzyme which can phosphorylate or dephosphorylate isocitrate dehydrogenase (IDH) on a specific serine residue. This is a regulatory mechanism which enables bacteria to bypass the Krebs cycle via the glyoxylate shunt in response to the source of carbon. When bacteria are grown on glucose, IDH is fully active and unphosphorylated, but when grown on acetate or ethanol, the activity of IDH declines drastically concomitant with its phosphorylation. The protein is Isocitrate dehydrogenase kinase/phosphatase of Escherichia coli O139:H28 (strain E24377A / ETEC).